A 266-amino-acid polypeptide reads, in one-letter code: 3-methyl-2-oxobutanoate hydroxymethyltransferase (266 aa).

The Mg(2+) site is built by D45 and D84. Residues 45–46 (DS), D84, and K112 contribute to the 3-methyl-2-oxobutanoate site. E114 contributes to the Mg(2+) binding site. Catalysis depends on E181, which acts as the Proton acceptor.

The protein belongs to the PanB family. As to quaternary structure, homodecamer; pentamer of dimers. Mg(2+) serves as cofactor.

It is found in the cytoplasm. It carries out the reaction 3-methyl-2-oxobutanoate + (6R)-5,10-methylene-5,6,7,8-tetrahydrofolate + H2O = 2-dehydropantoate + (6S)-5,6,7,8-tetrahydrofolate. Its pathway is cofactor biosynthesis; (R)-pantothenate biosynthesis; (R)-pantoate from 3-methyl-2-oxobutanoate: step 1/2. Functionally, catalyzes the reversible reaction in which hydroxymethyl group from 5,10-methylenetetrahydrofolate is transferred onto alpha-ketoisovalerate to form ketopantoate. In Pseudomonas fluorescens (strain Pf0-1), this protein is 3-methyl-2-oxobutanoate hydroxymethyltransferase.